Here is a 389-residue protein sequence, read N- to C-terminus: Acetylornithine deacetylase (389 aa).

Residue His85 participates in Zn(2+) binding. Asp87 is a catalytic residue. Asp117 lines the Zn(2+) pocket. Glu149 is an active-site residue. Positions 150, 174, and 360 each coordinate Zn(2+).

The protein belongs to the peptidase M20A family. ArgE subfamily. In terms of assembly, homodimer. The cofactor is Zn(2+). It depends on Co(2+) as a cofactor. Requires glutathione as cofactor.

The protein resides in the cytoplasm. It catalyses the reaction N(2)-acetyl-L-ornithine + H2O = L-ornithine + acetate. The protein operates within amino-acid biosynthesis; L-arginine biosynthesis; L-ornithine from N(2)-acetyl-L-ornithine (linear): step 1/1. Functionally, catalyzes the hydrolysis of the amide bond of N(2)-acetylated L-amino acids. Cleaves the acetyl group from N-acetyl-L-ornithine to form L-ornithine, an intermediate in L-arginine biosynthesis pathway, and a branchpoint in the synthesis of polyamines. In Yersinia pseudotuberculosis serotype O:1b (strain IP 31758), this protein is Acetylornithine deacetylase.